We begin with the raw amino-acid sequence, 224 residues long: N-(5'-phosphoribosyl)anthranilate isomerase (224 aa).

It belongs to the TrpF family.

The enzyme catalyses N-(5-phospho-beta-D-ribosyl)anthranilate = 1-(2-carboxyphenylamino)-1-deoxy-D-ribulose 5-phosphate. Its pathway is amino-acid biosynthesis; L-tryptophan biosynthesis; L-tryptophan from chorismate: step 3/5. This chain is N-(5'-phosphoribosyl)anthranilate isomerase (TRP1), found in Saccharomyces cerevisiae (strain ATCC 204508 / S288c) (Baker's yeast).